The following is a 419-amino-acid chain: Tol-Pal system protein TolB (419 aa).

The signal sequence occupies residues 1–19 (MFNRIISLFLLLFTGQVIA).

Belongs to the TolB family. As to quaternary structure, the Tol-Pal system is composed of five core proteins: the inner membrane proteins TolA, TolQ and TolR, the periplasmic protein TolB and the outer membrane protein Pal. They form a network linking the inner and outer membranes and the peptidoglycan layer.

Its subcellular location is the periplasm. Functionally, part of the Tol-Pal system, which plays a role in outer membrane invagination during cell division and is important for maintaining outer membrane integrity. The sequence is that of Tol-Pal system protein TolB from Legionella pneumophila subsp. pneumophila (strain Philadelphia 1 / ATCC 33152 / DSM 7513).